We begin with the raw amino-acid sequence, 403 residues long: Acetate kinase (403 aa).

Asparagine 8 serves as a coordination point for Mg(2+). Lysine 15 provides a ligand contact to ATP. Arginine 90 is a substrate binding site. The active-site Proton donor/acceptor is aspartate 147. Residues 207–211 (HLGSG), 282–284 (DLR), and 330–334 (GVGEN) contribute to the ATP site. Glutamate 384 lines the Mg(2+) pocket.

This sequence belongs to the acetokinase family. In terms of assembly, homodimer. Requires Mg(2+) as cofactor. Mn(2+) is required as a cofactor.

The protein resides in the cytoplasm. It carries out the reaction acetate + ATP = acetyl phosphate + ADP. It functions in the pathway metabolic intermediate biosynthesis; acetyl-CoA biosynthesis; acetyl-CoA from acetate: step 1/2. Catalyzes the formation of acetyl phosphate from acetate and ATP. Can also catalyze the reverse reaction. The protein is Acetate kinase of Exiguobacterium sibiricum (strain DSM 17290 / CCUG 55495 / CIP 109462 / JCM 13490 / 255-15).